The sequence spans 153 residues: UPF0311 protein RPA1785 (153 aa).

The protein belongs to the UPF0311 family.

In Rhodopseudomonas palustris (strain ATCC BAA-98 / CGA009), this protein is UPF0311 protein RPA1785.